A 146-amino-acid chain; its full sequence is Hemoglobin subunit beta (146 aa).

A Globin domain is found at 2-146; that stretch reads FLTPEENGHV…VANALAHKYH (145 aa). Thr-12 carries the phosphothreonine modification. Ser-44 carries the phosphoserine modification. Residue Lys-59 is modified to N6-acetyllysine. His-63 contributes to the heme b binding site. Lys-82 is subject to N6-acetyllysine. Position 92 (His-92) interacts with heme b. Position 93 is an S-nitrosocysteine (Cys-93). Lys-144 is subject to N6-acetyllysine.

The protein belongs to the globin family. Heterotetramer of two alpha chains and two beta chains. As to expression, red blood cells.

Involved in oxygen transport from the lung to the various peripheral tissues. The polypeptide is Hemoglobin subunit beta (HBB) (Hapalemur griseus (Gray gentle lemur)).